The primary structure comprises 61 residues: Alpha-conotoxin CnIJ (61 aa).

The first 17 residues, 1-17 (MMFTVFLLVVLTTTVVS), serve as a signal peptide directing secretion. A propeptide spanning residues 18 to 44 (FPSDSASDGRDDEAKDERSDMYELKRN) is cleaved from the precursor. Cystine bridges form between Cys47–Cys52 and Cys48–Cys59. Cys59 carries the post-translational modification Cysteine amide.

It belongs to the conotoxin A superfamily. In terms of tissue distribution, expressed by the venom duct.

The protein localises to the secreted. This Conus consors (Singed cone) protein is Alpha-conotoxin CnIJ.